We begin with the raw amino-acid sequence, 470 residues long: Probable E3 ubiquitin-protein ligase TRIML1 (470 aa).

The RING-type zinc-finger motif lies at 22-63; sequence CFICLDYFSSPVTTECGHSFCLMCLLKSWEEHNTPLSCPECW. Coiled coils occupy residues 135-170 and 196-235; these read SEAE…KERV and KEEE…GKMI. In terms of domain architecture, B30.2/SPRY spans 273–470; it reads TELSLCHITG…NTDPLIICHI (198 aa).

Interacts with USP5. As to expression, testis.

It catalyses the reaction S-ubiquitinyl-[E2 ubiquitin-conjugating enzyme]-L-cysteine + [acceptor protein]-L-lysine = [E2 ubiquitin-conjugating enzyme]-L-cysteine + N(6)-ubiquitinyl-[acceptor protein]-L-lysine.. Its pathway is protein modification; protein ubiquitination. In terms of biological role, probable E3 ubiquitin-protein ligase which plays an important role in blastocyst development. Involved in progression of blastocyst stage and subsequent embryo development. The protein is Probable E3 ubiquitin-protein ligase TRIML1 (Triml1) of Mus musculus (Mouse).